The sequence spans 181 residues: Acireductone dioxygenase (181 aa).

The Fe(2+) site is built by histidine 98, histidine 100, glutamate 104, and histidine 142. The Ni(2+) site is built by histidine 98, histidine 100, glutamate 104, and histidine 142.

Belongs to the acireductone dioxygenase (ARD) family. As to quaternary structure, monomer. Fe(2+) is required as a cofactor. It depends on Ni(2+) as a cofactor.

The enzyme catalyses 1,2-dihydroxy-5-(methylsulfanyl)pent-1-en-3-one + O2 = 3-(methylsulfanyl)propanoate + CO + formate + 2 H(+). It carries out the reaction 1,2-dihydroxy-5-(methylsulfanyl)pent-1-en-3-one + O2 = 4-methylsulfanyl-2-oxobutanoate + formate + 2 H(+). Its pathway is amino-acid biosynthesis; L-methionine biosynthesis via salvage pathway; L-methionine from S-methyl-5-thio-alpha-D-ribose 1-phosphate: step 5/6. Its function is as follows. Catalyzes 2 different reactions between oxygen and the acireductone 1,2-dihydroxy-3-keto-5-methylthiopentene (DHK-MTPene) depending upon the metal bound in the active site. Fe-containing acireductone dioxygenase (Fe-ARD) produces formate and 2-keto-4-methylthiobutyrate (KMTB), the alpha-ketoacid precursor of methionine in the methionine recycle pathway. Ni-containing acireductone dioxygenase (Ni-ARD) produces methylthiopropionate, carbon monoxide and formate, and does not lie on the methionine recycle pathway. The chain is Acireductone dioxygenase from Alcanivorax borkumensis (strain ATCC 700651 / DSM 11573 / NCIMB 13689 / SK2).